A 446-amino-acid polypeptide reads, in one-letter code: Probable ribosomal RNA small subunit methyltransferase B (446 aa).

S-adenosyl-L-methionine-binding positions include 260–266 (CAAPGGK), Asp284, Asp311, and Asp330. Catalysis depends on Cys383, which acts as the Nucleophile.

This sequence belongs to the class I-like SAM-binding methyltransferase superfamily. RsmB/NOP family.

Its subcellular location is the cytoplasm. The catalysed reaction is cytidine(967) in 16S rRNA + S-adenosyl-L-methionine = 5-methylcytidine(967) in 16S rRNA + S-adenosyl-L-homocysteine + H(+). Specifically methylates the cytosine at position 967 (m5C967) of 16S rRNA. The protein is Probable ribosomal RNA small subunit methyltransferase B of Synechocystis sp. (strain ATCC 27184 / PCC 6803 / Kazusa).